A 695-amino-acid chain; its full sequence is Ubiquitin carboxyl-terminal hydrolase 20 (695 aa).

Disordered stretches follow at residues 1 to 20 and 42 to 162; these read MLMA…SSIL and SLAL…SLFY. Composition is skewed to low complexity over residues 9–20 and 61–86; these read PSSILPRSSSIL and NHDS…SQSV. A compositionally biased stretch (acidic residues) spans 112–124; sequence DDIDDDIWGDDDL. In terms of domain architecture, USP spans 176–476; sequence AGLWNLGNSC…DSYILFYARE (301 aa). The active-site Nucleophile is Cys185. His435 functions as the Proton acceptor in the catalytic mechanism. The span at 556–571 shows a compositional bias: low complexity; sequence SAESSSGEESPMGELL. 2 disordered regions span residues 556 to 585 and 674 to 695; these read SAES…PCTE and AREL…LKTT.

It belongs to the peptidase C19 family.

It catalyses the reaction Thiol-dependent hydrolysis of ester, thioester, amide, peptide and isopeptide bonds formed by the C-terminal Gly of ubiquitin (a 76-residue protein attached to proteins as an intracellular targeting signal).. Functionally, recognizes and hydrolyzes the peptide bond at the C-terminal Gly of ubiquitin. Involved in the processing of poly-ubiquitin precursors as well as that of ubiquitinated proteins. This Arabidopsis thaliana (Mouse-ear cress) protein is Ubiquitin carboxyl-terminal hydrolase 20 (UBP20).